Reading from the N-terminus, the 517-residue chain is Cytochrome P450 monooxygenase calE (517 aa).

An N-linked (GlcNAc...) asparagine glycan is attached at asparagine 8. A helical membrane pass occupies residues 14–34 (SLMHHYILIAILVASIIAMVV). Heme is bound at residue cysteine 458.

Belongs to the cytochrome P450 family. It depends on heme as a cofactor.

It is found in the membrane. Its pathway is secondary metabolite biosynthesis. Its function is as follows. Cytochrome P450 monooxygenase; part of the gene cluster that mediates the biosynthesis of calbistrin A and related compounds. Calbistrin A is a secondary metabolite with an interesting structure that was recently found to have bioactivity against leukemia cells. It consists of two polyketides linked by an ester bond: a bicyclic decalin containing polyketide and a linear 12 carbon dioic acid structure. The polyketide synthase calA is probably responsible for forming the decalin moiety. Because calA lacks a designated enoylreductase (ER) domain, the required activity is provided by the trans-enoyl reductase calK. Following release from the PKS, calF then probably catalyzes the oxidation and the subsequent Diels Alder cycloisomerization that lead to the formation of the decalin moiety. The decalin polyketide backbone includes two C-methyl groups, at C7 and C11 in backbone, of which the C7 position is probably methylated by the methyltransferase domain of calA. A candidate for adding the methyl group at C11, if not done by CalA, is the cluster methyltransferase calH. Several additional tailoring enzymes within the cluster could be involved in the modification of the decalin polyketide product. Those include the 3 cytochrome P450 monooxygenases CalE, CalG and CalL, of which one might be responsible for the introduction of the extra hydroxyl group attached to the backbone of the decalin moiety, at position C9 in the backbone, that allows for attachment of the linear moiety. One tailoring enzyme activity that is expected to be involved in biosynthesis of calbistrin is an acyltransferase for connecting the two polyketide synthase products, and which could be performed by the cluster acyltransferase calJ. The enzyme responsible for the biosynthesis of the linear moiety, probably a second PKS, has not been identified yet. The chain is Cytochrome P450 monooxygenase calE from Penicillium decumbens.